A 1053-amino-acid polypeptide reads, in one-letter code: Mediator of RNA polymerase II transcription subunit 16 (1053 aa).

A disordered region spans residues 139 to 170 (KTEGNTEKNKDTKQIGNGSGTNGHGDSPINTP). Over residues 142 to 151 (GNTEKNKDTK) the composition is skewed to basic and acidic residues.

Belongs to the Mediator complex subunit 16 family. As to quaternary structure, component of the Mediator complex.

The protein resides in the nucleus. Its function is as follows. Component of the Mediator complex, a coactivator involved in the regulated transcription of nearly all RNA polymerase II-dependent genes. Mediator functions as a bridge to convey information from gene-specific regulatory proteins to the basal RNA polymerase II transcription machinery. Mediator is recruited to promoters by direct interactions with regulatory proteins and serves as a scaffold for the assembly of a functional preinitiation complex with RNA polymerase II and the general transcription factors. In Candida albicans (strain SC5314 / ATCC MYA-2876) (Yeast), this protein is Mediator of RNA polymerase II transcription subunit 16 (SIN4).